We begin with the raw amino-acid sequence, 128 residues long: Protein BEX1 (128 aa).

The interval 1 to 37 (MESKEKRAVNNLSMENTNQENEEKEEKEQVANKGEPL) is disordered. Ser-105 is modified (phosphoserine). Positions 107–128 (SLRAVSTDPPHHDHHDEFCLMP) are disordered. Residues 115–128 (PPHHDHHDEFCLMP) show a composition bias toward basic and acidic residues. The interval 117-121 (HHDHH) is his cluster. Cys-125 lines the Zn(2+) pocket.

It belongs to the BEX family. As to quaternary structure, interacts with neurotrophin receptor p75NTR/NGFR. Interacts with OMP. In terms of processing, phosphorylated. Phosphorylation of Ser-105 protects it from the proteasome. Ubiquitinated. Degraded by the proteasome.

Its subcellular location is the nucleus. It localises to the cytoplasm. Signaling adapter molecule involved in p75NTR/NGFR signaling. Plays a role in cell cycle progression and neuronal differentiation. Inhibits neuronal differentiation in response to nerve growth factor (NGF). May act as a link between the cell cycle and neurotrophic factor signaling, possibly by functioning as an upstream modulator of receptor signaling, coordinating biological responses to external signals with internal cellular states. In absence of reductive stress, acts as a pseudosubstrate for the CRL2(FEM1B) complex: associates with FEM1B via zinc, thereby preventing association between FEM1B and its substrates. In Macaca fascicularis (Crab-eating macaque), this protein is Protein BEX1 (BEX1).